The following is a 241-amino-acid chain: Pyridoxal phosphate phosphatase PHOSPHO2 (241 aa).

Asp8 acts as the Nucleophile in catalysis. Positions 8 and 10 each coordinate Mg(2+). The Proton donor role is filled by Asp10. The substrate site is built by Asp19 and Asp99. Asp179 is a binding site for Mg(2+).

It belongs to the HAD-like hydrolase superfamily. PHOSPHO family. It depends on Mg(2+) as a cofactor.

It carries out the reaction pyridoxal 5'-phosphate + H2O = pyridoxal + phosphate. Phosphatase that has high activity toward pyridoxal 5'-phosphate (PLP). Also active at much lower level toward pyrophosphate, phosphoethanolamine (PEA), phosphocholine (PCho), phospho-l-tyrosine, fructose-6-phosphate, p-nitrophenyl phosphate, and h-glycerophosphate. The sequence is that of Pyridoxal phosphate phosphatase PHOSPHO2 (PHOSPHO2) from Bos taurus (Bovine).